The primary structure comprises 804 residues: MYNHKTVEKKWQKYWAEHDTFKTGNDPKKKNYYALDMFPFPSGKGLHVGHPEGYTATDIISRMKRAQGYNVLHPMGWDAFGLPTEQYALKTGEDPEKVTKENIANFKKQLNKLGFSYDWDREVTTSDPNYYKWTQWVFEQMYKKGLAYEAEVPVNWSPDLGTVVANEEIVDGKTERGGYPVYRRNMRQWMLKMTAYADRLLEDLDDLDWPEPVKEMQRNWIGRSEGAQVTFKVKDSDKTFDVFTTRPDTLFGVSYTVLAPESKLVQEITTPEQKAAVDSYIKKIESKSDLERTDLNKDKTGVFTGAYAINPVNGKEVPVWISDYVLASYGTGAVMAVPAHDDRDYAFATKFGLPINRVIEGGDLEKEAFTGNGKHINSDFLDGLDNEEAKKRMIEWLEDHNAGQKKVNYKLRDWDFSRQRYWGEPIPVIHWEDGTTSLVPEDELPLRLPHATDIKPSGTPESPLANLTDWVNVVDKNGRKGKRETNTMPNWAGSSWYYLRYIDPHNDKELADYDLLKKWLPVDLYIGGAEHAVRHLLYARFWHKVLYDLGVVPTKEPFQRLYNQGLILKNHEKMSKSKGNVVNPDDVIDEYGADSLRMYEMFMGPLDASIDWDDNGPASTKKFLDRVWRLFVNDLDLKAIPQERIVDKNDGELDKVYAETVKKVTEDFDALHFNTAISQMMVFINAAQKAKTIPREYAEGFVKLLAPVAPHMMEEIWQVFGHDESISYAKWPEYDPAKLVESTVEIMVQVNGKLRGKFKAAKDSAKDALEKEALSLDHVQKFLDGKDVKKVIVIPNKIVNIVAK.

A 'HIGH' region motif is present at residues 39–50; the sequence is PFPSGKGLHVGH. Residues 573-577 carry the 'KMSKS' region motif; sequence KMSKS. ATP is bound at residue lysine 576.

Belongs to the class-I aminoacyl-tRNA synthetase family.

The protein resides in the cytoplasm. The catalysed reaction is tRNA(Leu) + L-leucine + ATP = L-leucyl-tRNA(Leu) + AMP + diphosphate. This is Leucine--tRNA ligase from Lactobacillus gasseri (strain ATCC 33323 / DSM 20243 / BCRC 14619 / CIP 102991 / JCM 1131 / KCTC 3163 / NCIMB 11718 / NCTC 13722 / AM63).